The following is a 161-amino-acid chain: Allophycocyanin beta chain (161 aa).

Position 71 is an N4-methylasparagine (N71). (2R,3E)-phycocyanobilin is bound at residue C81.

This sequence belongs to the phycobiliprotein family. Heterodimer of an alpha and a beta chain. Contains one covalently linked phycocyanobilin chromophore.

It is found in the plastid. The protein localises to the chloroplast thylakoid membrane. In terms of biological role, light-harvesting photosynthetic bile pigment-protein from the phycobiliprotein complex. Allophycocyanin has a maximum absorption at approximately 650 nanometers. This is Allophycocyanin beta chain (apcB) from Pyropia haitanensis (Red seaweed).